The chain runs to 305 residues: Protoheme IX farnesyltransferase (305 aa).

A run of 9 helical transmembrane segments spans residues 31–51 (VMSLVIFTGFVGMWLAPYSVH), 52–72 (PFIAGIAVVCIALGAGSAGAI), 96–118 (VIESDEALSFGLITGFFAVFFMA), 122–144 (NLLASFLLLFTIFYYICIYTIWL), 151–171 (NIVIGGVSGALPPVIGYAAVS), 180–200 (ILFLIIFIWTPPHSWALALFC), 225–245 (ILIYSILLFIVSLMPFFIGMN), 247–267 (FIYLIISGILGVVFLYYAGSL), and 281–301 (FAYSIFYLFFIFLLLYSTNTI).

It belongs to the UbiA prenyltransferase family. Protoheme IX farnesyltransferase subfamily.

It is found in the cell inner membrane. The catalysed reaction is heme b + (2E,6E)-farnesyl diphosphate + H2O = Fe(II)-heme o + diphosphate. It participates in porphyrin-containing compound metabolism; heme O biosynthesis; heme O from protoheme: step 1/1. In terms of biological role, converts heme B (protoheme IX) to heme O by substitution of the vinyl group on carbon 2 of heme B porphyrin ring with a hydroxyethyl farnesyl side group. This is Protoheme IX farnesyltransferase from Rickettsia peacockii (strain Rustic).